The chain runs to 300 residues: Ribonuclease HIII (300 aa).

The RNase H type-2 domain occupies 83-300 (IPIIGSDEVG…THKAQALLTK (218 aa)). Residues D89, E90, and D194 each contribute to the a divalent metal cation site.

This sequence belongs to the RNase HII family. RnhC subfamily. The cofactor is Mn(2+). It depends on Mg(2+) as a cofactor.

Its subcellular location is the cytoplasm. It carries out the reaction Endonucleolytic cleavage to 5'-phosphomonoester.. Functionally, endonuclease that specifically degrades the RNA of RNA-DNA hybrids. The polypeptide is Ribonuclease HIII (Streptococcus pyogenes serotype M12 (strain MGAS2096)).